The following is a 130-amino-acid chain: Small ribosomal subunit protein uS9 (130 aa).

Belongs to the universal ribosomal protein uS9 family.

This is Small ribosomal subunit protein uS9 from Buchnera aphidicola subsp. Acyrthosiphon pisum (strain Tuc7).